A 414-amino-acid chain; its full sequence is Tyrosine--tRNA ligase (414 aa).

Tyr35 serves as a coordination point for L-tyrosine. The 'HIGH' region signature appears at 40-49; sequence PTADSLHVGH. L-tyrosine-binding residues include Tyr164 and Gln168. The 'KMSKS' region signature appears at 226-230; that stretch reads KFGKT. Lys229 contributes to the ATP binding site. Positions 347 to 414 constitute an S4 RNA-binding domain; that stretch reads TKVIDALIEV…KKKYFVILIK (68 aa).

This sequence belongs to the class-I aminoacyl-tRNA synthetase family. TyrS type 1 subfamily. In terms of assembly, homodimer.

Its subcellular location is the cytoplasm. The catalysed reaction is tRNA(Tyr) + L-tyrosine + ATP = L-tyrosyl-tRNA(Tyr) + AMP + diphosphate + H(+). Catalyzes the attachment of tyrosine to tRNA(Tyr) in a two-step reaction: tyrosine is first activated by ATP to form Tyr-AMP and then transferred to the acceptor end of tRNA(Tyr). This is Tyrosine--tRNA ligase from Mycoplasma mycoides subsp. mycoides SC (strain CCUG 32753 / NCTC 10114 / PG1).